A 784-amino-acid chain; its full sequence is LPS-assembly protein LptD (784 aa).

Residues 1–24 (MKKRIPTLLATMIATALYSQQGLA) form the signal peptide. Disulfide bonds link cysteine 31–cysteine 724 and cysteine 173–cysteine 725.

This sequence belongs to the LptD family. Component of the lipopolysaccharide transport and assembly complex. Interacts with LptE and LptA. Contains two intramolecular disulfide bonds.

Its subcellular location is the cell outer membrane. Functionally, together with LptE, is involved in the assembly of lipopolysaccharide (LPS) at the surface of the outer membrane. In Escherichia coli O157:H7, this protein is LPS-assembly protein LptD.